We begin with the raw amino-acid sequence, 94 residues long: Long neurotoxin-like OH-31 (94 aa).

Positions 1-19 (MKTLLLTLVVVTILCLDLG) are cleaved as a signal peptide. Disulfide bonds link Cys35/Cys55, Cys37/Cys66, Cys70/Cys81, and Cys82/Cys87.

This sequence belongs to the three-finger toxin family. Long-chain subfamily. Type II alpha-neurotoxin sub-subfamily. As to expression, expressed by the venom gland.

It is found in the secreted. Binds with high affinity to muscular nicotinic acetylcholine receptors (nAChRs), whereas it binds with a low affinity to neuronal alpha-7/CHRNA7 nAChRs. In Ophiophagus hannah (King cobra), this protein is Long neurotoxin-like OH-31.